Reading from the N-terminus, the 228-residue chain is Superoxide dismutase [Mn], mitochondrial (228 aa).

The N-terminal 24 residues, 1–24 (MALRTLVSRRTLATGLGFRQQLRG), are a transit peptide targeting the mitochondrion. Positions 52, 100, 189, and 193 each coordinate Mn(2+).

Belongs to the iron/manganese superoxide dismutase family. In terms of assembly, homotetramer. Mn(2+) serves as cofactor.

It localises to the mitochondrion matrix. The enzyme catalyses 2 superoxide + 2 H(+) = H2O2 + O2. In terms of biological role, destroys superoxide anion radicals which are normally produced within the cells and which are toxic to biological systems. In Nicotiana plumbaginifolia (Leadwort-leaved tobacco), this protein is Superoxide dismutase [Mn], mitochondrial (SODA).